The following is a 102-amino-acid chain: Small ribosomal subunit protein uS10 (102 aa).

It belongs to the universal ribosomal protein uS10 family. In terms of assembly, part of the 30S ribosomal subunit.

Functionally, involved in the binding of tRNA to the ribosomes. The sequence is that of Small ribosomal subunit protein uS10 from Geobacter metallireducens (strain ATCC 53774 / DSM 7210 / GS-15).